We begin with the raw amino-acid sequence, 320 residues long: UV DNA damage endonuclease (320 aa).

This sequence belongs to the uve1/UvsE family.

Its function is as follows. Component in a DNA repair pathway. Removal of UV LIGHT damaged nucleotides. Recognizes pyrimidine dimers and cleave a phosphodiester bond immediately 5' to the lesion. In Bacillus velezensis (strain DSM 23117 / BGSC 10A6 / LMG 26770 / FZB42) (Bacillus amyloliquefaciens subsp. plantarum), this protein is UV DNA damage endonuclease.